The primary structure comprises 642 residues: Extracellular metalloproteinase 5 (642 aa).

The signal sequence occupies residues 1–19; the sequence is MHGLLLAAGLLSLPLHVLA. Positions 20–246 are excised as a propeptide; it reads HPQPSTTTSL…VHNVVDYVAH (227 aa). The N-linked (GlcNAc...) asparagine glycan is linked to N287. Residue H430 coordinates Zn(2+). E431 is a catalytic residue. Residue H434 coordinates Zn(2+). N595 and N624 each carry an N-linked (GlcNAc...) asparagine glycan.

Belongs to the peptidase M36 family. It depends on Zn(2+) as a cofactor.

It is found in the secreted. Functionally, secreted metalloproteinase that allows assimilation of proteinaceous substrates and probably acts as a virulence factor. The polypeptide is Extracellular metalloproteinase 5 (MEP5) (Arthroderma gypseum (strain ATCC MYA-4604 / CBS 118893) (Microsporum gypseum)).